The chain runs to 155 residues: MNQAELQRHMEEVSLQFFQKEFRHQAVFNARLRTTGGRYLLKSHNIEMNPKYLENFGLAYFIGIMKHELCHYHLHIEKKGYQHRDQDFRELLKKVDAPRFCATIPREITMHEYTCKSCGKSFLRQRRFNVNRYRCGSCGGKLIQIGSKKIYTENA.

The SprT-like domain maps to 7–145; the sequence is QRHMEEVSLQ…GSCGGKLIQI (139 aa). Histidine 67 serves as a coordination point for Zn(2+). Residue glutamate 68 is part of the active site. Histidine 71 is a binding site for Zn(2+).

This sequence belongs to the SprT family. Zn(2+) serves as cofactor.

The protein resides in the cytoplasm. The polypeptide is Protein SprT-like (Listeria monocytogenes serotype 4a (strain HCC23)).